The chain runs to 123 residues: Late histone H2B.L1 (123 aa).

Positions 1–10 are enriched in low complexity; sequence MPAKAQPAGK. The interval 1–33 is disordered; that stretch reads MPAKAQPAGKKGSKKAKAPRPSGGKKRRRRRKE. A compositionally biased stretch (basic residues) spans 11 to 32; that stretch reads KGSKKAKAPRPSGGKKRRRRRK. O-linked (GlcNAc) serine glycosylation is present at Ser110. Lys118 is covalently cross-linked (Glycyl lysine isopeptide (Lys-Gly) (interchain with G-Cter in ubiquitin)).

It belongs to the histone H2B family. In terms of assembly, the nucleosome is a histone octamer containing two molecules each of H2A, H2B, H3 and H4 assembled in one H3-H4 heterotetramer and two H2A-H2B heterodimers. The octamer wraps approximately 147 bp of DNA. Post-translationally, monoubiquitination of Lys-118 gives a specific tag for epigenetic transcriptional activation and is also prerequisite for histone H3 'Lys-4' and 'Lys-79' methylation. In terms of processing, glcNAcylation at Ser-110 promotes monoubiquitination of Lys-118. It fluctuates in response to extracellular glucose, and associates with transcribed genes.

The protein resides in the nucleus. It is found in the chromosome. Core component of nucleosome. Nucleosomes wrap and compact DNA into chromatin, limiting DNA accessibility to the cellular machineries which require DNA as a template. Histones thereby play a central role in transcription regulation, DNA repair, DNA replication and chromosomal stability. DNA accessibility is regulated via a complex set of post-translational modifications of histones, also called histone code, and nucleosome remodeling. The protein is Late histone H2B.L1 of Strongylocentrotus purpuratus (Purple sea urchin).